A 493-amino-acid chain; its full sequence is Phenmedipham hydrolase (493 aa).

Catalysis depends on Ser188, which acts as the Acyl-ester intermediate. Residues Glu307 and His402 each act as charge relay system in the active site.

Belongs to the type-B carboxylesterase/lipase family. In terms of assembly, monomer.

May degrade the phenylcarbamate herbicides phenmedipham and desmedipham cometabolically by hydrolyzing their central carbamate linkages. Conveys resistance to the herbicide phenmedipham. This Pseudarthrobacter oxydans (Arthrobacter oxydans) protein is Phenmedipham hydrolase (pcd).